Consider the following 181-residue polypeptide: ADP-ribosylation factor 2-A (181 aa).

A lipid anchor (N-myristoyl glycine) is attached at G2. GTP contacts are provided by residues G24–T31, D67–Q71, and N126–D129.

This sequence belongs to the small GTPase superfamily. Arf family.

It localises to the golgi apparatus. With respect to regulation, activated by AGD10. GTP-binding protein involved in protein trafficking; may modulate vesicle budding and uncoating within the Golgi apparatus. This chain is ADP-ribosylation factor 2-A (ARF2-A), found in Arabidopsis thaliana (Mouse-ear cress).